The chain runs to 333 residues: Adenosine deaminase (333 aa).

His-12 and His-14 together coordinate Zn(2+). Positions 14, 16, and 170 each coordinate substrate. His-197 is a binding site for Zn(2+). Glu-200 (proton donor) is an active-site residue. Asp-278 contacts Zn(2+). Substrate is bound at residue Asp-279.

This sequence belongs to the metallo-dependent hydrolases superfamily. Adenosine and AMP deaminases family. Adenosine deaminase subfamily. Zn(2+) is required as a cofactor.

It carries out the reaction adenosine + H2O + H(+) = inosine + NH4(+). The enzyme catalyses 2'-deoxyadenosine + H2O + H(+) = 2'-deoxyinosine + NH4(+). In terms of biological role, catalyzes the hydrolytic deamination of adenosine and 2-deoxyadenosine. In Escherichia coli O7:K1 (strain IAI39 / ExPEC), this protein is Adenosine deaminase.